The primary structure comprises 391 residues: METIKSVDIYELGSPGEKSSPWSSTILIVKLTSSNGNIGYGEAPTTFMTLPVKESMREVERVFKDQNYFNIEKNMREFYKHSFYLSRSMEATSALSAFEIASWDLIGKDLGTPVYNLLGGEYNSELRAYANGWYSDCLEPDDFVSRAKEYIKKGYTAFKFDPFRNNFDRIGNDGIKKAVDIVSAMRSELGENIDLLIECHGRFSTKYAIKVGQALDEFNPLFIEEPIHPEMELGLFDFKRYVNTPVALGERLLNKEDFARYISQGMVDIVQADLTNSKGILEAKKISAIVESFGGLMAFHNAFGPVQTAATLNVDYTLTNFLIQESFEDSWPDWKRNLFSGYRIENGHFKLSGKPGLGITADEKLMEKLIYDGMEEFNKNEPSWVVSGTYK.

Glu198 lines the Mg(2+) pocket. His200 serves as the catalytic Proton donor. Positions 224 and 250 each coordinate Mg(2+). His300 serves as the catalytic Proton acceptor.

This sequence belongs to the mandelate racemase/muconate lactonizing enzyme family. GaD subfamily. In terms of assembly, homooctamer. Mg(2+) is required as a cofactor.

It carries out the reaction D-gluconate = 2-dehydro-3-deoxy-D-gluconate + H2O. It catalyses the reaction D-galactonate = 2-dehydro-3-deoxy-D-galactonate + H2O. It functions in the pathway carbohydrate acid metabolism; D-gluconate degradation. Its function is as follows. Involved in the degradation of glucose and galactose via the nonphosphorylative variant of Entner-Doudoroff pathway. Catalyzes the dehydration of gluconate to produce 2-keto-3-deoxygluconate (KDG). It is also able to catalyze the dehydration of galactonate to produce 2-keto-3-deoxygalactonate (KDGal). In Picrophilus torridus (strain ATCC 700027 / DSM 9790 / JCM 10055 / NBRC 100828 / KAW 2/3), this protein is D-gluconate/D-galactonate dehydratase.